A 252-amino-acid polypeptide reads, in one-letter code: Phosphate import ATP-binding protein PstB 1 (252 aa).

Residues 6 to 247 (LQVSDLSVYY…PQHKETEDYI (242 aa)) form the ABC transporter domain. Position 38–45 (38–45 (GPSGSGKS)) interacts with ATP.

Belongs to the ABC transporter superfamily. Phosphate importer (TC 3.A.1.7) family. The complex is composed of two ATP-binding proteins (PstB), two transmembrane proteins (PstC and PstA) and a solute-binding protein (PstS).

Its subcellular location is the cell membrane. It catalyses the reaction phosphate(out) + ATP + H2O = ADP + 2 phosphate(in) + H(+). Functionally, part of the ABC transporter complex PstSACB involved in phosphate import. Responsible for energy coupling to the transport system. The chain is Phosphate import ATP-binding protein PstB 1 from Streptococcus pneumoniae (strain ATCC BAA-255 / R6).